The following is a 612-amino-acid chain: 2-isopropylmalate synthase B (612 aa).

A Pyruvate carboxyltransferase domain is found at 71-344 (VRIFDTTLRD…YTGINTQHIL (274 aa)). 3 residues coordinate a divalent metal cation: aspartate 80, histidine 277, and asparagine 313.

The protein belongs to the alpha-IPM synthase/homocitrate synthase family. LeuA type 1 subfamily. Homodimer. A divalent metal cation serves as cofactor.

The enzyme catalyses 3-methyl-2-oxobutanoate + acetyl-CoA + H2O = (2S)-2-isopropylmalate + CoA + H(+). Its pathway is amino-acid biosynthesis; L-leucine biosynthesis; L-leucine from 3-methyl-2-oxobutanoate: step 1/4. Functionally, catalyzes the condensation of the acetyl group of acetyl-CoA with 3-methyl-2-oxobutanoate (2-oxoisovalerate) to form 3-carboxy-3-hydroxy-4-methylpentanoate (2-isopropylmalate). The chain is 2-isopropylmalate synthase B (IPMSB) from Solanum pennellii (Tomato).